The primary structure comprises 393 residues: Phosphoglycerate kinase (393 aa).

Residues 21 to 23, arginine 36, 59 to 62, arginine 114, and arginine 147 contribute to the substrate site; these read DLN and HLGR. Residues lysine 198, glutamate 320, and 346 to 349 each bind ATP; that span reads GGDT.

It belongs to the phosphoglycerate kinase family. Monomer.

It is found in the cytoplasm. The catalysed reaction is (2R)-3-phosphoglycerate + ATP = (2R)-3-phospho-glyceroyl phosphate + ADP. It participates in carbohydrate degradation; glycolysis; pyruvate from D-glyceraldehyde 3-phosphate: step 2/5. The polypeptide is Phosphoglycerate kinase (Methylobacillus flagellatus (strain ATCC 51484 / DSM 6875 / VKM B-1610 / KT)).